The primary structure comprises 361 residues: tRNA/tmRNA (uracil-C(5))-methyltransferase (361 aa).

5 residues coordinate S-adenosyl-L-methionine: glutamine 185, tyrosine 213, asparagine 218, glutamate 234, and aspartate 294. The Nucleophile role is filled by cysteine 319. Glutamate 353 acts as the Proton acceptor in catalysis.

The protein belongs to the class I-like SAM-binding methyltransferase superfamily. RNA M5U methyltransferase family. TrmA subfamily.

It catalyses the reaction uridine(54) in tRNA + S-adenosyl-L-methionine = 5-methyluridine(54) in tRNA + S-adenosyl-L-homocysteine + H(+). The enzyme catalyses uridine(341) in tmRNA + S-adenosyl-L-methionine = 5-methyluridine(341) in tmRNA + S-adenosyl-L-homocysteine + H(+). Its function is as follows. Dual-specificity methyltransferase that catalyzes the formation of 5-methyluridine at position 54 (m5U54) in all tRNAs, and that of position 341 (m5U341) in tmRNA (transfer-mRNA). The polypeptide is tRNA/tmRNA (uracil-C(5))-methyltransferase (Pseudomonas putida (strain ATCC 700007 / DSM 6899 / JCM 31910 / BCRC 17059 / LMG 24140 / F1)).